The sequence spans 209 residues: Putative tripartite motif-containing protein 61 (209 aa).

Residues 16–57 (CPICLDYLKDPVTISCGHNFCLSCIIMSWKDLHDSFPCPFCH) form an RING-type zinc finger. The B box-type zinc-finger motif lies at 92–133 (EEKHVCKKHNQVLTFFCQKDLELLCPRCSLSTDHQHHCVWPI). Zn(2+) is bound by residues Cys-97, His-100, Cys-119, and His-125.

This Homo sapiens (Human) protein is Putative tripartite motif-containing protein 61 (TRIM61).